Here is a 535-residue protein sequence, read N- to C-terminus: Dipeptide-binding protein (535 aa).

The signal sequence occupies residues 1-28; the sequence is MRISLKKSGMLKLGLSLVAMTVAASVQA. C34 and C262 form a disulfide bridge. Residues 48–50, 383–385, and 433–436 contribute to the glycyl-L-leucine site; these read TSG, RPY, and WTGD. A disulfide bridge links C450 with C463.

It belongs to the bacterial solute-binding protein 5 family. The complex is composed of two ATP-binding proteins (DppD and DppF), two transmembrane proteins (DppB and DppC) and a solute-binding protein (DppA).

The protein localises to the periplasm. With respect to regulation, heme binding is inhibited by dipeptide. Functionally, part of the ABC transporter DppABCDF involved in dipeptide transport. Binds dipeptides and accepts a wide range of side chains, including small neutral, bulky hydrophobic, and positively and negatively charged groups. Tripeptides are poor substrates. DppA alone controls the specificity of the Dpp transporter. In addition, plays a role in chemotaxis toward peptides via interaction with the chemotaxis protein Tap. Binds heme. When a foreign outer membrane heme receptor is expressed in E.coli, DppABCDF can also transport heme and its precursor, 5-aminolevulinic acid (ALA), from the periplasm into the cytoplasm. In Escherichia coli (strain K12), this protein is Dipeptide-binding protein.